The sequence spans 135 residues: Histone H2B.4 (135 aa).

Composition is skewed to basic and acidic residues over residues 1-12 (MAPKAAEKKPVE) and 23-35 (EKKVPTSKEGGEK). Residues 1–43 (MAPKAAEKKPVEKTPAVKKPKAEKKVPTSKEGGEKKGKKKSKK) are disordered. Residues K8 and K24 each carry the N6-acetyllysine modification. K131 participates in a covalent cross-link: Glycyl lysine isopeptide (Lys-Gly) (interchain with G-Cter in ubiquitin).

The protein belongs to the histone H2B family. The nucleosome is a histone octamer containing two molecules each of H2A, H2B, H3 and H4 assembled in one H3-H4 heterotetramer and two H2A-H2B heterodimers. The octamer wraps approximately 147 bp of DNA. Post-translationally, can be acetylated to form H2BK6ac and H2BK33ac. Monoubiquitinated to form H2BK143ub1; may give a specific tag for epigenetic transcriptional activation. Expressed preferentially in meristematic tissues.

The protein resides in the nucleus. It localises to the chromosome. In terms of biological role, core component of nucleosome. Nucleosomes wrap and compact DNA into chromatin, limiting DNA accessibility to the cellular machineries which require DNA as a template. Histones thereby play a central role in transcription regulation, DNA repair, DNA replication and chromosomal stability. DNA accessibility is regulated via a complex set of post-translational modifications of histones, also called histone code, and nucleosome remodeling. This is Histone H2B.4 (TH153) from Triticum aestivum (Wheat).